The sequence spans 486 residues: ATP synthase subunit beta (486 aa).

Residues 1-12 (MTTTAEKTDRPG) show a composition bias toward basic and acidic residues. Positions 1–22 (MTTTAEKTDRPGKPGSSDTSGR) are disordered. 171–178 (GGAGVGKT) contributes to the ATP binding site.

It belongs to the ATPase alpha/beta chains family. F-type ATPases have 2 components, CF(1) - the catalytic core - and CF(0) - the membrane proton channel. CF(1) has five subunits: alpha(3), beta(3), gamma(1), delta(1), epsilon(1). CF(0) has three main subunits: a(1), b(2) and c(9-12). The alpha and beta chains form an alternating ring which encloses part of the gamma chain. CF(1) is attached to CF(0) by a central stalk formed by the gamma and epsilon chains, while a peripheral stalk is formed by the delta and b chains.

The protein localises to the cell membrane. The enzyme catalyses ATP + H2O + 4 H(+)(in) = ADP + phosphate + 5 H(+)(out). Its function is as follows. Produces ATP from ADP in the presence of a proton gradient across the membrane. The catalytic sites are hosted primarily by the beta subunits. This Mycobacterium tuberculosis (strain ATCC 25177 / H37Ra) protein is ATP synthase subunit beta.